A 459-amino-acid chain; its full sequence is Chromosomal replication initiator protein DnaA (459 aa).

The interval 1 to 83 is domain I, interacts with DnaA modulators; the sequence is MKNAREIWRN…NKLEIHFIEE (83 aa). Residues 83-121 are domain II; sequence ESQAHKYAPADGSSNESIAVTETKEQPVLLPSKEEGDLG. Positions 122–338 are domain III, AAA+ region; it reads QLNDKYIFET…GALTRVVAYA (217 aa). Residues Gly166, Gly168, Lys169, and Thr170 each coordinate ATP. The tract at residues 339–459 is domain IV, binds dsDNA; the sequence is KLVGRPIDPD…IQTLKKALSN (121 aa).

This sequence belongs to the DnaA family. As to quaternary structure, oligomerizes as a right-handed, spiral filament on DNA at oriC.

The protein resides in the cytoplasm. Its function is as follows. Plays an essential role in the initiation and regulation of chromosomal replication. ATP-DnaA binds to the origin of replication (oriC) to initiate formation of the DNA replication initiation complex once per cell cycle. Binds the DnaA box (a 9 base pair repeat at the origin) and separates the double-stranded (ds)DNA. Forms a right-handed helical filament on oriC DNA; dsDNA binds to the exterior of the filament while single-stranded (ss)DNA is stabiized in the filament's interior. The ATP-DnaA-oriC complex binds and stabilizes one strand of the AT-rich DNA unwinding element (DUE), permitting loading of DNA polymerase. After initiation quickly degrades to an ADP-DnaA complex that is not apt for DNA replication. Binds acidic phospholipids. The chain is Chromosomal replication initiator protein DnaA from Exiguobacterium sp. (strain ATCC BAA-1283 / AT1b).